We begin with the raw amino-acid sequence, 74 residues long: Small ribosomal subunit protein bS18 (74 aa).

The protein belongs to the bacterial ribosomal protein bS18 family. Part of the 30S ribosomal subunit. Forms a tight heterodimer with protein bS6.

Functionally, binds as a heterodimer with protein bS6 to the central domain of the 16S rRNA, where it helps stabilize the platform of the 30S subunit. This chain is Small ribosomal subunit protein bS18, found in Natranaerobius thermophilus (strain ATCC BAA-1301 / DSM 18059 / JW/NM-WN-LF).